Consider the following 229-residue polypeptide: Large ribosomal subunit protein uL1 (229 aa).

The protein belongs to the universal ribosomal protein uL1 family. In terms of assembly, part of the 50S ribosomal subunit.

Binds directly to 23S rRNA. The L1 stalk is quite mobile in the ribosome, and is involved in E site tRNA release. In terms of biological role, protein L1 is also a translational repressor protein, it controls the translation of the L11 operon by binding to its mRNA. In Streptococcus pneumoniae (strain Taiwan19F-14), this protein is Large ribosomal subunit protein uL1.